A 345-amino-acid chain; its full sequence is Phosphoribosylformylglycinamidine cyclo-ligase (345 aa).

The protein belongs to the AIR synthase family.

It localises to the cytoplasm. It carries out the reaction 2-formamido-N(1)-(5-O-phospho-beta-D-ribosyl)acetamidine + ATP = 5-amino-1-(5-phospho-beta-D-ribosyl)imidazole + ADP + phosphate + H(+). Its pathway is purine metabolism; IMP biosynthesis via de novo pathway; 5-amino-1-(5-phospho-D-ribosyl)imidazole from N(2)-formyl-N(1)-(5-phospho-D-ribosyl)glycinamide: step 2/2. The chain is Phosphoribosylformylglycinamidine cyclo-ligase from Ligilactobacillus salivarius (strain UCC118) (Lactobacillus salivarius).